Reading from the N-terminus, the 322-residue chain is MEGDLSGFNIDAPRWDQCTFLGRVKHFFNITDPRTVFASEQELDWAKAVVEKSRMGLVPPGTQMEQLLYAKKLYDSAFHPDTGEKMNVIGRMSFQVPGGMLITGFMLQFYRTMPAVIFWQWVNQSFNALVNYTNRNAASPTSVRQMALSYFTATTTAVATAVGMNMWTKRAPPLVGRWVPFAAVAAANCVNIPMMRQQELIQGICVKDRNQNELGHSQRAAAVGIAQVVISRITMAAPGMILLPVIMERLERLHLMKKVKVMHAPLQVLLCGCFLLFMVPVACGLFPQECELSVSYLEPELRDTIKAKYGEQVLFVYFNKGL.

Met-1 is modified (N-acetylmethionine). A run of 5 helical transmembrane segments spans residues 99–119, 147–167, 174–194, 223–243, and 266–286; these read GMLI…VIFW, ALSY…MNMW, LVGR…NIPM, VGIA…MILL, and LQVL…CGLF.

Belongs to the sideroflexin family. As to expression, expressed in brain, heart, kidney, spleen, thymus, liver, stomach and skin.

Its subcellular location is the mitochondrion inner membrane. It localises to the mitochondrion outer membrane. The enzyme catalyses L-serine(in) = L-serine(out). In terms of biological role, mitochondrial amino-acid transporter that mediates transport of serine into mitochondria. Involved in mitochondrial iron homeostasis by regulating heme biosynthesis. The polypeptide is Sideroflexin-2 (Mus musculus (Mouse)).